Consider the following 362-residue polypeptide: 3-isopropylmalate dehydrogenase (362 aa).

The substrate site is built by R97, R107, R135, and D225. Mg(2+) contacts are provided by D225, D249, and D253. 283 to 295 is a binding site for NAD(+); sequence GSAPDIAHKNLAN.

The protein belongs to the isocitrate and isopropylmalate dehydrogenases family. LeuB type 1 subfamily. In terms of assembly, homodimer. It depends on Mg(2+) as a cofactor. Mn(2+) serves as cofactor.

Its subcellular location is the cytoplasm. It carries out the reaction (2R,3S)-3-isopropylmalate + NAD(+) = 4-methyl-2-oxopentanoate + CO2 + NADH. The protein operates within amino-acid biosynthesis; L-leucine biosynthesis; L-leucine from 3-methyl-2-oxobutanoate: step 3/4. In terms of biological role, catalyzes the oxidation of 3-carboxy-2-hydroxy-4-methylpentanoate (3-isopropylmalate) to 3-carboxy-4-methyl-2-oxopentanoate. The product decarboxylates to 4-methyl-2 oxopentanoate. This chain is 3-isopropylmalate dehydrogenase, found in Prochlorococcus marinus (strain SARG / CCMP1375 / SS120).